The chain runs to 274 residues: WIMGHMVNAIEQVDEFLNLGANAIEFDIDFDKDGIAQITHHGIPCDCGRKCTKKAIFTEYLDNIRQVTTPDDPKLREQLVLLALDLKLQRISSAKAYRAGEDVAKKLLDHYWQRGNSRARAYILLNIPLVEDYEFIRAFKDTLKNEGYESYNDKVGINFTGNEDLDKIRDVLEILGIHKQVWQADGITSCFARGTERLKEALEKRDTPGYSYINKVYAWTLVRKSIMRRSLRLGVDGVMSNNPDRVIKVLKEKEFADKFRLATYNDNPWEKFRG.

Histidine 5 is an active-site residue. Residues glutamate 25 and aspartate 27 each contribute to the Mg(2+) site. Catalysis depends on histidine 41, which acts as the Nucleophile. 2 disulfides stabilise this stretch: cysteine 45-cysteine 51 and cysteine 47-cysteine 190. A Mg(2+)-binding site is contributed by aspartate 85.

This sequence belongs to the arthropod phospholipase D family. Class II subfamily. Mg(2+) is required as a cofactor. In terms of tissue distribution, expressed by the venom gland.

It is found in the secreted. It carries out the reaction an N-(acyl)-sphingosylphosphocholine = an N-(acyl)-sphingosyl-1,3-cyclic phosphate + choline. The catalysed reaction is an N-(acyl)-sphingosylphosphoethanolamine = an N-(acyl)-sphingosyl-1,3-cyclic phosphate + ethanolamine. It catalyses the reaction a 1-acyl-sn-glycero-3-phosphocholine = a 1-acyl-sn-glycero-2,3-cyclic phosphate + choline. The enzyme catalyses a 1-acyl-sn-glycero-3-phosphoethanolamine = a 1-acyl-sn-glycero-2,3-cyclic phosphate + ethanolamine. Dermonecrotic toxins cleave the phosphodiester linkage between the phosphate and headgroup of certain phospholipids (sphingolipid and lysolipid substrates), forming an alcohol (often choline) and a cyclic phosphate. This toxin acts on sphingomyelin (SM). It may also act on ceramide phosphoethanolamine (CPE), lysophosphatidylcholine (LPC) and lysophosphatidylethanolamine (LPE), but not on lysophosphatidylserine (LPS), and lysophosphatidylglycerol (LPG). It acts by transphosphatidylation, releasing exclusively cyclic phosphate products as second products. Induces dermonecrosis, hemolysis, increased vascular permeability, edema, inflammatory response, and platelet aggregation. The polypeptide is Dermonecrotic toxin SdSicTox-betaIIB1bxiii (Sicarius cf. damarensis (strain GJB-2008) (Six-eyed sand spider)).